A 132-amino-acid polypeptide reads, in one-letter code: UPF0102 protein LI0223 (132 aa).

The protein belongs to the UPF0102 family.

This Lawsonia intracellularis (strain PHE/MN1-00) protein is UPF0102 protein LI0223.